We begin with the raw amino-acid sequence, 44 residues long: Photosystem I reaction center subunit IX (44 aa).

The helical transmembrane segment at 9–29 (FVRSAPVVAAIWLSLTAGIII) threads the bilayer.

The protein belongs to the PsaJ family.

The protein resides in the cellular thylakoid membrane. May help in the organization of the PsaE and PsaF subunits. The sequence is that of Photosystem I reaction center subunit IX from Prochlorococcus marinus (strain MIT 9301).